We begin with the raw amino-acid sequence, 357 residues long: Prostaglandin D2 receptor (357 aa).

The Extracellular portion of the chain corresponds to 1–20 (MNESYRCQTSTWVERGSSAT). Asparagine 2 is a glycosylation site (N-linked (GlcNAc...) asparagine). Residues 21 to 41 (MGAVLFGAGLLGNLLALVLLA) traverse the membrane as a helical segment. At 42–58 (RSGLGSCRPGPLHPPPS) the chain is on the cytoplasmic side. The chain crosses the membrane as a helical span at residues 59–79 (VFYVLVCGLTVTDLLGKCLIS). Residues 80–106 (PMVLAAYAQNQSLKELLPASGNQLCET) lie on the Extracellular side of the membrane. Asparagine 89 carries N-linked (GlcNAc...) asparagine glycosylation. Cysteine 104 and cysteine 182 are oxidised to a cystine. Residues 107-127 (FAFLMSFFGLASTLQLLAMAV) form a helical membrane-spanning segment. Topologically, residues 128–149 (ECWLSLGHPFFYQRHVTLRRGV) are cytoplasmic. The chain crosses the membrane as a helical span at residues 150-170 (LVAPVVAAFCLAFCALPFAGF). Residues 171-194 (GKFVQYCPGTWCFIQMIHKERSFS) are Extracellular-facing. The chain crosses the membrane as a helical span at residues 195–215 (VIGFSVLYSSLMALLVLATVV). Topologically, residues 216-261 (CNLGAMYNLYDMHRRQRHYPHRCSRDRAQSGSDYRHGSLHPLEELD) are cytoplasmic. The chain crosses the membrane as a helical span at residues 262-282 (HFVLLALMTVLFTMCSLPLIY). Residues 283 to 306 (RAYYGAFKLENKAEGDSEDLQALR) lie on the Extracellular side of the membrane. A helical membrane pass occupies residues 307–327 (FLSVISIVDPWIFIIFRTSVF). Residues 328–357 (RMLFHKVFTRPLIYRNWSSHSQQSNVESTL) lie on the Cytoplasmic side of the membrane.

It belongs to the G-protein coupled receptor 1 family. In terms of tissue distribution, most abundantly expressed in the ileum, followed by lung, stomach and uterus.

Its subcellular location is the cell membrane. Receptor for prostaglandin D2 (PGD2). The activity of this receptor is mainly mediated by G(s) proteins that stimulate adenylate cyclase, resulting in an elevation of intracellular cAMP. A mobilization of calcium is also observed, but without formation of inositol 1,4,5-trisphosphate. Involved in PLA2G3-dependent maturation of mast cells. PLA2G3 is secreted by immature mast cells and acts on nearby fibroblasts upstream to PTDGS to synthesize PGD2, which in turn promotes mast cell maturation and degranulation via PTGDR. This chain is Prostaglandin D2 receptor (Ptgdr), found in Mus musculus (Mouse).